The sequence spans 409 residues: Ubiquitin-associated domain-containing protein 1 (409 aa).

Met1 carries the post-translational modification N-acetylmethionine. The Ubiquitin-like domain occupies 14 to 98; that stretch reads LRLHICAADG…LLLIKKRAPS (85 aa). In terms of domain architecture, UBA 1 spans 187–231; the sequence is DEDERVDETALRQLTEMGFPESRASKALRLNHMSVPQAMEWLIEH. Residues 235-273 form a disordered region; it reads PAIDTPLPGHAAQAEASAAAATSSSSSEAAVGTSVEDEE. A compositionally biased stretch (low complexity) spans 245–264; the sequence is AAQAEASAAAATSSSSSEAA. A UBA 2 domain is found at 292–332; that stretch reads RADARAVISLMEMGFDEKEVIDALRVNNNQQNAACEWLLGD. Residues 357 to 396 enclose the STI1 domain; the sequence is NPVVQLGLTNPKTLLAFEDMLENPLNSTQWMNDPETGPVM.

As to quaternary structure, component of the KPC complex composed of RNF123/KPC1 and UBAC1/KPC2. Interacts (via ubiquitin-like domain) with RNF123. Interacts (via ubiquitin-like and UBA domains) with the proteasome via its N-terminal domain.

It is found in the cytoplasm. It participates in protein modification; protein ubiquitination. In terms of biological role, non-catalytic component of the KPC complex, a E3 ubiquitin-protein ligase complex that mediates polyubiquitination of target proteins, such as CDKN1B and NFKB1. The KPC complex catalyzes polyubiquitination and proteasome-mediated degradation of CDKN1B during G1 phase of the cell cycle. The KPC complex also acts as a key regulator of the NF-kappa-B signaling by promoting maturation of the NFKB1 component of NF-kappa-B by catalyzing ubiquitination of the NFKB1 p105 precursor. Within the KPC complex, UBAC1 acts as an adapter that promotes the transfer of target proteins that have been polyubiquitinated by RNF123/KPC1 to the 26S proteasome. The protein is Ubiquitin-associated domain-containing protein 1 (Ubac1) of Rattus norvegicus (Rat).